A 1071-amino-acid polypeptide reads, in one-letter code: SLIT-ROBO Rho GTPase-activating protein 2 (1071 aa).

The F-BAR domain maps to 22–325; sequence KEIRAQLTEQ…AVENLDATSD (304 aa). Over residues 181-203 the composition is skewed to basic and acidic residues; it reads LKEAEKQEEKQIGKSVKQEDRQT. The interval 181-211 is disordered; it reads LKEAEKQEEKQIGKSVKQEDRQTPRSPDSTA. At serine 206 the chain carries Phosphoserine. The stretch at 363–401 forms a coiled coil; it reads QSELVQRCQQLQSRLSTLKIENEEVKKTMEATLQTIQDI. Serine 427, serine 500, serine 691, and serine 695 each carry phosphoserine. The Rho-GAP domain maps to 489–679; it reads ARRSSTVRKQ…TIIIQHENIF (191 aa). Residues 700–726 form a disordered region; the sequence is CDSTHGETTSAEDSTQDVTAEHHTSDD. A compositionally biased stretch (polar residues) spans 705-717; the sequence is GETTSAEDSTQDV. At serine 724 the chain carries Phosphoserine. Positions 728-787 constitute an SH3 domain; sequence CEPIEAIAKFDYVGRTARELSFKKGASLLLYQRASDDWWEGRHNGIDGLIPHQYIVVQDT. Serine 795 carries the phosphoserine modification. Disordered regions lie at residues 795–819 and 838–918; these read SSPKSEIEVMSEPPEEKVTARTGAS and RKRP…DSPQ. Positions 855–868 are enriched in low complexity; sequence HGLGSSLTDSSSLG. Polar residues-rich tracts occupy residues 874–885 and 897–907; these read RPSSQPIMSQNL and GHGSLNSISRH. Position 916 is a phosphoserine (serine 916). A Symmetric dimethylarginine; by PRMT5 modification is found at arginine 927. Serine 930 bears the Phosphoserine mark. Positions 940-968 form a coiled coil; it reads EVIAQDIEATMNSALNELQELERQSSAKH. Residues 984–1012 are disordered; that stretch reads PVVAPTSEPSSPLHTQLLKDPEPAFQRSA. Residues serine 990, serine 994, serine 1013, and serine 1027 each carry the phosphoserine modification. A disordered region spans residues 1029–1071; it reads KMAAPVKPPATRPKPTVFPKTNATSPGVNSSASPQATDKSCTV. Positions 1047 to 1071 are enriched in polar residues; it reads PKTNATSPGVNSSASPQATDKSCTV.

In terms of assembly, homodimer. Forms a heterooligomer with SRGAP1 and SRGAP3 through its F-BAR domain. Interacts (via SH3 domain) with GPHN. Interacts (via SH3 domain) with FMNL1 (activated by RAC1); regulates the actin filament severing activity of FMNL1 and actin dynamics. Interacts (via SH3 domain) with FMNL3. Interacts with RAC1; specifically stimulates RAC1 GTPase activity. Interacts (via F-BAR domain) with HOMER1. Interacts with ROBO1 and ROBO2. Interacts with FASLG. Interacts with PRMT5. Methylation at Arg-927 is required for the stimulation of cell migration, dimerization and localization at the plasma membrane protrusions.

Its subcellular location is the cell membrane. The protein localises to the cell projection. It localises to the dendritic spine. It is found in the postsynaptic density. The protein resides in the postsynaptic cell membrane. Its subcellular location is the lamellipodium. The protein localises to the cytoplasmic vesicle. It localises to the phagosome. It is found in the nucleus. The protein resides in the cytoplasm. Its subcellular location is the cytosol. In terms of biological role, postsynaptic RAC1 GTPase activating protein (GAP) that plays a key role in neuronal morphogenesis and migration mainly during development of the cerebral cortex. Regulates excitatory and inhibitory synapse maturation and density in cortical pyramidal neurons. SRGAP2/SRGAP2A limits excitatory and inhibitory synapse density through its RAC1-specific GTPase activating activity, while it promotes maturation of both excitatory and inhibitory synapses through its ability to bind to the postsynaptic scaffolding protein HOMER1 at excitatory synapses, and the postsynaptic protein GPHN at inhibitory synapses. Mechanistically, acts by binding and deforming membranes, thereby regulating actin dynamics to regulate cell migration and differentiation. Promotes cell repulsion and contact inhibition of locomotion: localizes to protrusions with curved edges and controls the duration of RAC1 activity in contact protrusions. In non-neuronal cells, may also play a role in cell migration by regulating the formation of lamellipodia and filopodia. This is SLIT-ROBO Rho GTPase-activating protein 2 from Mus musculus (Mouse).